A 99-amino-acid chain; its full sequence is Nucleoid-associated protein LCABL_24440 (99 aa).

This sequence belongs to the YbaB/EbfC family. Homodimer.

The protein resides in the cytoplasm. It is found in the nucleoid. Functionally, binds to DNA and alters its conformation. May be involved in regulation of gene expression, nucleoid organization and DNA protection. The polypeptide is Nucleoid-associated protein LCABL_24440 (Lacticaseibacillus casei (strain BL23) (Lactobacillus casei)).